The chain runs to 160 residues: CXXC motif containing zinc binding protein (160 aa).

4 residues coordinate Zn(2+): Cys33, Cys36, Cys67, and Cys70.

Belongs to the UPF0587 family.

In Xenopus laevis (African clawed frog), this protein is CXXC motif containing zinc binding protein (czib).